Consider the following 390-residue polypeptide: Succinate--CoA ligase [ADP-forming] subunit beta (390 aa).

An ATP-grasp domain is found at 9–245; sequence KHLLKKYNIP…TTQEDEHETM (237 aa). Residues Lys-46, 53 to 55, Glu-99, Ser-102, and Glu-107 each bind ATP; that span reads GRG. 2 residues coordinate Mg(2+): Asn-200 and Asp-214. Residues Asn-265 and 322–324 each bind substrate; that span reads GIV.

It belongs to the succinate/malate CoA ligase beta subunit family. In terms of assembly, heterotetramer of two alpha and two beta subunits. Requires Mg(2+) as cofactor.

The enzyme catalyses succinate + ATP + CoA = succinyl-CoA + ADP + phosphate. The catalysed reaction is GTP + succinate + CoA = succinyl-CoA + GDP + phosphate. The protein operates within carbohydrate metabolism; tricarboxylic acid cycle; succinate from succinyl-CoA (ligase route): step 1/1. In terms of biological role, succinyl-CoA synthetase functions in the citric acid cycle (TCA), coupling the hydrolysis of succinyl-CoA to the synthesis of either ATP or GTP and thus represents the only step of substrate-level phosphorylation in the TCA. The beta subunit provides nucleotide specificity of the enzyme and binds the substrate succinate, while the binding sites for coenzyme A and phosphate are found in the alpha subunit. This chain is Succinate--CoA ligase [ADP-forming] subunit beta, found in Coxiella burnetii (strain RSA 331 / Henzerling II).